The sequence spans 86 residues: MDPYSVIIKPQLSEKTMNQIYDENKITFVVRRSANKRVIKEAFQDLYDTKVVGVNTHITPRGNKVATIELEEADAAEDIAVRLGVF.

The protein belongs to the universal ribosomal protein uL23 family. Part of the 50S ribosomal subunit. Contacts protein L29.

Its function is as follows. Binds to 23S rRNA. One of the proteins that surrounds the polypeptide exit tunnel on the outside of the ribosome. The chain is Large ribosomal subunit protein uL23 from Methanosphaera stadtmanae (strain ATCC 43021 / DSM 3091 / JCM 11832 / MCB-3).